Here is a 397-residue protein sequence, read N- to C-terminus: Elongation factor Tu (397 aa).

Positions 10-207 constitute a tr-type G domain; it reads LPHVNVGTIG…TLDSYIPEPV (198 aa). Positions 19–26 are G1; the sequence is GHVDHGKT. Residue 19-26 participates in GTP binding; that stretch reads GHVDHGKT. Position 26 (T26) interacts with Mg(2+). A G2 region spans residues 60 to 64; sequence GITIN. Residues 81–84 are G3; that stretch reads DCPG. Residues 81–85 and 136–139 contribute to the GTP site; these read DCPGH and NKAD. Positions 136-139 are G4; the sequence is NKAD. A G5 region spans residues 174-176; the sequence is SAR.

This sequence belongs to the TRAFAC class translation factor GTPase superfamily. Classic translation factor GTPase family. EF-Tu/EF-1A subfamily. As to quaternary structure, monomer.

The protein localises to the cytoplasm. It catalyses the reaction GTP + H2O = GDP + phosphate + H(+). Its function is as follows. GTP hydrolase that promotes the GTP-dependent binding of aminoacyl-tRNA to the A-site of ribosomes during protein biosynthesis. This is Elongation factor Tu from Pseudomonas putida (strain ATCC 700007 / DSM 6899 / JCM 31910 / BCRC 17059 / LMG 24140 / F1).